The primary structure comprises 349 residues: Methylthioribose-1-phosphate isomerase (349 aa).

Residues 51–53, Arg94, and Gln199 contribute to the substrate site; that span reads RGA. Asp240 (proton donor) is an active-site residue. 250 to 251 serves as a coordination point for substrate; it reads NK.

Belongs to the EIF-2B alpha/beta/delta subunits family. MtnA subfamily. Homodimer.

The enzyme catalyses 5-(methylsulfanyl)-alpha-D-ribose 1-phosphate = 5-(methylsulfanyl)-D-ribulose 1-phosphate. It functions in the pathway amino-acid biosynthesis; L-methionine biosynthesis via salvage pathway; L-methionine from S-methyl-5-thio-alpha-D-ribose 1-phosphate: step 1/6. Its function is as follows. Catalyzes the interconversion of methylthioribose-1-phosphate (MTR-1-P) into methylthioribulose-1-phosphate (MTRu-1-P). The chain is Methylthioribose-1-phosphate isomerase from Bacillus mycoides (strain KBAB4) (Bacillus weihenstephanensis).